Consider the following 307-residue polypeptide: Probable transposase for transposon Tn903 (307 aa).

Its function is as follows. Required for transposition of transposon Tn903. The chain is Probable transposase for transposon Tn903 from Escherichia coli.